A 379-amino-acid polypeptide reads, in one-letter code: Inactive deoxyhypusine synthase (379 aa).

The segment at 1–48 (MLASVPAPRPAKKDSAASRRKSASKSTGAAVKDGSSARVSASGAAESP) is disordered. A compositionally biased stretch (low complexity) spans 36-47 (SARVSASGAAES). Residues 115 to 119 (SNMIS), 141 to 143 (SAG), E147, and D256 contribute to the NAD(+) site. 146-147 (EE) provides a ligand contact to spermidine. D261 is a spermidine binding site. NAD(+) is bound at residue G302. A spermidine-binding site is contributed by H307. Position 323–324 (323–324 (TG)) interacts with NAD(+). Spermidine-binding positions include 329-331 (GCV) and 338-344 (DDVACGL). 357–358 (DA) provides a ligand contact to NAD(+).

The protein belongs to the deoxyhypusine synthase family.

This chain is Inactive deoxyhypusine synthase, found in Leishmania donovani.